The chain runs to 600 residues: Aspartate--tRNA(Asp/Asn) ligase (600 aa).

Glu-183 is an L-aspartate binding site. Positions 207 to 210 are aspartate; that stretch reads QLFK. Position 229 (Arg-229) interacts with L-aspartate. ATP is bound by residues 229–231 and Gln-238; that span reads RDE. His-456 provides a ligand contact to L-aspartate. Residue Glu-490 participates in ATP binding. L-aspartate is bound at residue Arg-497. Position 542–545 (542–545) interacts with ATP; sequence GLDR.

It belongs to the class-II aminoacyl-tRNA synthetase family. Type 1 subfamily. Homodimer.

Its subcellular location is the cytoplasm. The catalysed reaction is tRNA(Asx) + L-aspartate + ATP = L-aspartyl-tRNA(Asx) + AMP + diphosphate. In terms of biological role, aspartyl-tRNA synthetase with relaxed tRNA specificity since it is able to aspartylate not only its cognate tRNA(Asp) but also tRNA(Asn). Reaction proceeds in two steps: L-aspartate is first activated by ATP to form Asp-AMP and then transferred to the acceptor end of tRNA(Asp/Asn). The polypeptide is Aspartate--tRNA(Asp/Asn) ligase (Moorella thermoacetica (strain ATCC 39073 / JCM 9320)).